The primary structure comprises 412 residues: Citrate synthase (412 aa).

Active-site residues include His-305 and Asp-364.

It belongs to the citrate synthase family.

The catalysed reaction is oxaloacetate + acetyl-CoA + H2O = citrate + CoA + H(+). It functions in the pathway carbohydrate metabolism; tricarboxylic acid cycle; isocitrate from oxaloacetate: step 1/2. In Rickettsia bellii, this protein is Citrate synthase (gltA).